The following is a 1071-amino-acid chain: Carbamoyl phosphate synthase large chain (1071 aa).

Positions 1 to 403 (MPKRTDLKSI…SFQKALRGLE (403 aa)) are carboxyphosphate synthetic domain. 12 residues coordinate ATP: arginine 129, arginine 169, glycine 175, glycine 176, glutamine 208, valine 210, glutamate 215, glycine 241, valine 242, histidine 243, glutamine 285, and glutamate 299. The region spanning 133-328 (KEAMEKIGLS…IAKVAAKLAV (196 aa)) is the ATP-grasp 1 domain. Mg(2+) contacts are provided by glutamine 285, glutamate 299, and asparagine 301. Mn(2+) contacts are provided by glutamine 285, glutamate 299, and asparagine 301. Positions 404 to 548 (TGLCGFNPRS…YSTYEEECES (145 aa)) are oligomerization domain. The interval 549 to 930 (RPSDRKKVMI…AYYKAQLGAG (382 aa)) is carbamoyl phosphate synthetic domain. Residues 673 to 864 (QKVLNDLGLR…LAKVGARCMA (192 aa)) enclose the ATP-grasp 2 domain. 10 residues coordinate ATP: arginine 709, phenylalanine 748, leucine 750, glutamate 755, glycine 780, isoleucine 781, histidine 782, serine 783, glutamine 823, and glutamate 835. Glutamine 823, glutamate 835, and asparagine 837 together coordinate Mg(2+). Residues glutamine 823, glutamate 835, and asparagine 837 each coordinate Mn(2+). An MGS-like domain is found at 931–1071 (ERLNPTGKIF…ELHGRLKNRN (141 aa)). The tract at residues 931–1071 (ERLNPTGKIF…ELHGRLKNRN (141 aa)) is allosteric domain.

The protein belongs to the CarB family. In terms of assembly, composed of two chains; the small (or glutamine) chain promotes the hydrolysis of glutamine to ammonia, which is used by the large (or ammonia) chain to synthesize carbamoyl phosphate. Tetramer of heterodimers (alpha,beta)4. The cofactor is Mg(2+). Requires Mn(2+) as cofactor.

The catalysed reaction is hydrogencarbonate + L-glutamine + 2 ATP + H2O = carbamoyl phosphate + L-glutamate + 2 ADP + phosphate + 2 H(+). It carries out the reaction hydrogencarbonate + NH4(+) + 2 ATP = carbamoyl phosphate + 2 ADP + phosphate + 2 H(+). It participates in amino-acid biosynthesis; L-arginine biosynthesis; carbamoyl phosphate from bicarbonate: step 1/1. The protein operates within pyrimidine metabolism; UMP biosynthesis via de novo pathway; (S)-dihydroorotate from bicarbonate: step 1/3. Functionally, large subunit of the glutamine-dependent carbamoyl phosphate synthetase (CPSase). CPSase catalyzes the formation of carbamoyl phosphate from the ammonia moiety of glutamine, carbonate, and phosphate donated by ATP, constituting the first step of 2 biosynthetic pathways, one leading to arginine and/or urea and the other to pyrimidine nucleotides. The large subunit (synthetase) binds the substrates ammonia (free or transferred from glutamine from the small subunit), hydrogencarbonate and ATP and carries out an ATP-coupled ligase reaction, activating hydrogencarbonate by forming carboxy phosphate which reacts with ammonia to form carbamoyl phosphate. The protein is Carbamoyl phosphate synthase large chain of Neisseria meningitidis serogroup B (strain ATCC BAA-335 / MC58).